The chain runs to 234 residues: Glucosamine-6-phosphate deaminase (234 aa).

Asp-62 acts as the Proton acceptor; for enolization step in catalysis. Asn-128 functions as the For ring-opening step in the catalytic mechanism. Residue His-130 is the Proton acceptor; for ring-opening step of the active site. The active-site For ring-opening step is Glu-135.

The protein belongs to the glucosamine/galactosamine-6-phosphate isomerase family. NagB subfamily.

The enzyme catalyses alpha-D-glucosamine 6-phosphate + H2O = beta-D-fructose 6-phosphate + NH4(+). It functions in the pathway amino-sugar metabolism; N-acetylneuraminate degradation; D-fructose 6-phosphate from N-acetylneuraminate: step 5/5. Catalyzes the reversible isomerization-deamination of glucosamine 6-phosphate (GlcN6P) to form fructose 6-phosphate (Fru6P) and ammonium ion. The chain is Glucosamine-6-phosphate deaminase from Streptococcus uberis (strain ATCC BAA-854 / 0140J).